The sequence spans 178 residues: GTP-dependent dephospho-CoA kinase (178 aa).

Asp-55, Val-57, Asp-74, Lys-76, and Glu-127 together coordinate GTP.

The protein belongs to the GTP-dependent DPCK family.

It catalyses the reaction 3'-dephospho-CoA + GTP = GDP + CoA + H(+). It functions in the pathway cofactor biosynthesis; coenzyme A biosynthesis. Its function is as follows. Catalyzes the GTP-dependent phosphorylation of the 3'-hydroxyl group of dephosphocoenzyme A to form coenzyme A (CoA). The chain is GTP-dependent dephospho-CoA kinase from Saccharolobus islandicus (strain Y.G.57.14 / Yellowstone #1) (Sulfolobus islandicus).